The chain runs to 313 residues: Dimethyladenosine transferase (313 aa).

Positions 37, 39, 64, 85, 113, and 128 each coordinate S-adenosyl-L-methionine.

It belongs to the class I-like SAM-binding methyltransferase superfamily. rRNA adenine N(6)-methyltransferase family. Part of the small subunit (SSU) processome, composed of more than 70 proteins and the RNA chaperone small nucleolar RNA (snoRNA) U3.

The protein resides in the nucleus. Its subcellular location is the nucleoplasm. The protein localises to the nucleolus. It catalyses the reaction adenosine(1779)/adenosine(1780) in 18S rRNA + 4 S-adenosyl-L-methionine = N(6)-dimethyladenosine(1779)/N(6)-dimethyladenosine(1780) in 18S rRNA + 4 S-adenosyl-L-homocysteine + 4 H(+). Functionally, specifically dimethylates two adjacent adenosines in the loop of a conserved hairpin near the 3'-end of 18S rRNA in the 40S particle. Involved in the pre-rRNA processing steps leading to small-subunit rRNA production independently of its RNA-modifying catalytic activity. Part of the small subunit (SSU) processome, first precursor of the small eukaryotic ribosomal subunit. During the assembly of the SSU processome in the nucleolus, many ribosome biogenesis factors, an RNA chaperone and ribosomal proteins associate with the nascent pre-rRNA and work in concert to generate RNA folding, modifications, rearrangements and cleavage as well as targeted degradation of pre-ribosomal RNA by the RNA exosome. In Mus musculus (Mouse), this protein is Dimethyladenosine transferase (Dimt1).